The chain runs to 366 residues: Galactoside alpha-(1,2)-fucosyltransferase 1 (366 aa).

Topologically, residues 1–8 (MWPLSHRH) are cytoplasmic. A helical; Signal-anchor for type II membrane protein transmembrane segment spans residues 9–25 (LCLAFLLVCVLSAISFF). Topologically, residues 26–366 (LHVHQDSFRH…LSPLWTLAEP (341 aa)) are lumenal. 3 N-linked (GlcNAc...) asparagine glycosylation sites follow: asparagine 66, asparagine 302, and asparagine 328.

Belongs to the glycosyltransferase 11 family.

The protein resides in the golgi apparatus. The protein localises to the golgi stack membrane. It catalyses the reaction a beta-D-galactosyl-(1-&gt;4)-N-acetyl-beta-D-glucosaminyl derivative + GDP-beta-L-fucose = an alpha-L-Fuc-(1-&gt;2)-beta-D-Gal-(1-&gt;4)-beta-D-GlcNAc derivative + GDP + H(+). The catalysed reaction is a ganglioside GA1 + GDP-beta-L-fucose = a ganglioside Fuc-GA1 + GDP + H(+). The enzyme catalyses a beta-D-Gal-(1-&gt;3)-beta-D-GlcNAc-(1-&gt;3)-beta-D-Gal-(1-&gt;4)-beta-D-Glc-(1&lt;-&gt;1')-Cer(d18:1(4E)) + GDP-beta-L-fucose = alpha-L-fucosyl-(1-&gt;2)- beta-D-galactosyl-(1-&gt;3)-N-acetyl-beta-D-glucosaminyl-(1-&gt;3)-beta-D-galactosyl-(1-&gt;4)-beta-D-glucosyl-(1&lt;-&gt;1')-N-acylsphing-4-enine + GDP + H(+). It carries out the reaction a neolactoside nLc4Cer(d18:1(4E)) + GDP-beta-L-fucose = a neolactoside IV(2)-alpha-Fuc-nLc4Cer(d18:1(4E)) + GDP + H(+). It catalyses the reaction a ganglioside GM1 + GDP-beta-L-fucose = a ganglioside Fuc-GM1 + GDP + H(+). The catalysed reaction is beta-D-galactosyl-(1-&gt;3)-N-acetyl-D-galactosamine + GDP-beta-L-fucose = alpha-L-fucosyl-(1-&gt;2)-beta-D-galactosyl-(1-&gt;3)-N-acetyl-D-galactosamine + GDP + H(+). Its pathway is protein modification; protein glycosylation. Its function is as follows. Catalyzes the transfer of L-fucose, from a guanosine diphosphate-beta-L-fucose, to the terminal galactose residue of glycoconjugates through an alpha(1,2) linkage leading to H antigen synthesis that is an intermediate substrate in the synthesis of ABO blood group antigens. H antigen is essential for maturation of the glomerular layer of the main olfactory bulb, in cell migration and early cell-cell contacts during tumor associated angiogenesis. Preferentially fucosylates soluble lactose and to a lesser extent fucosylates glycolipids gangliosides GA1 and GM1a. The chain is Galactoside alpha-(1,2)-fucosyltransferase 1 from Alouatta caraya (Black howler monkey).